The sequence spans 814 residues: Cellulase/esterase CelE (814 aa).

An N-terminal signal peptide occupies residues 1 to 34 (MKKIVSLVCVLVMLVSILGSFSVVAASPVKGFQV). The tract at residues 35-354 (SGTKLLDASG…AVFWWDNGYY (320 aa)) is cellulase. Catalysis depends on Glu-193, which acts as the Proton donor; for cellulase activity. Catalysis depends on Glu-316, which acts as the Nucleophile; for cellulase activity. A Dockerin domain is found at 409 to 479 (ANILYGDVNG…LLRSIDKFPA (71 aa)). Residues Asp-415, Asn-417, Asp-419, Gly-420, Lys-421, Asp-426, Asp-451, Val-452, Asn-453, Asp-455, Lys-457, and Asp-462 each coordinate Ca(2+). Residues 490 to 814 (PGILYNGRFD…TAEIKNKLGW (325 aa)) form an esterase region. The active-site Nucleophile; for esterase activity is Ser-612.

In the N-terminal section; belongs to the glycosyl hydrolase 5 (cellulase A) family. This sequence in the C-terminal section; belongs to the carbohydrate esterase 2 (CE2) family.

The protein resides in the secreted. It catalyses the reaction Endohydrolysis of (1-&gt;4)-beta-D-glucosidic linkages in cellulose, lichenin and cereal beta-D-glucans.. The catalysed reaction is Deacetylation of xylans and xylo-oligosaccharides.. It participates in glycan metabolism; cellulose degradation. It functions in the pathway glycan degradation; xylan degradation. With respect to regulation, esterase activity of the CE2 module is inhibited when this domain binds to cellohexaose or beta-glucan. Its function is as follows. Multifunctional enzyme involved in the degradation of plant cell wall polysaccharides. Displays endoglucanase activity against carboxymethyl cellulose (CMC) and barley beta-glucan. Also catalyzes the deacetylation of acetylated birchwood xylan and glucomannan, with a preference for the latter, and of the synthetic substrate 4-nitrophenyl acetate (4-NPAc). This chain is Cellulase/esterase CelE, found in Acetivibrio thermocellus (strain ATCC 27405 / DSM 1237 / JCM 9322 / NBRC 103400 / NCIMB 10682 / NRRL B-4536 / VPI 7372) (Clostridium thermocellum).